Reading from the N-terminus, the 241-residue chain is Histidine utilization repressor (241 aa).

The HTH gntR-type domain maps to 11–79 (APFYEKVKQA…QGVGTFVAEP (69 aa)). A DNA-binding region (H-T-H motif) is located at residues 39-58 (EAELVAQFGFSRMTINRALR).

It functions in the pathway amino-acid degradation; L-histidine degradation into L-glutamate [regulation]. Functionally, repressor which binds to the hutP region in the histidine utilization (hut) operon. It blocks the expression of all the hut genes in the absence of inducer. In Klebsiella aerogenes (Enterobacter aerogenes), this protein is Histidine utilization repressor (hutC).